The chain runs to 498 residues: N-succinylglutamate 5-semialdehyde dehydrogenase 1 (498 aa).

231 to 236 is a binding site for NAD(+); it reads GSSNTG. Residues Glu254 and Cys288 contribute to the active site.

It belongs to the aldehyde dehydrogenase family. AstD subfamily.

The catalysed reaction is N-succinyl-L-glutamate 5-semialdehyde + NAD(+) + H2O = N-succinyl-L-glutamate + NADH + 2 H(+). The protein operates within amino-acid degradation; L-arginine degradation via AST pathway; L-glutamate and succinate from L-arginine: step 4/5. Its function is as follows. Catalyzes the NAD-dependent reduction of succinylglutamate semialdehyde into succinylglutamate. In Shewanella denitrificans (strain OS217 / ATCC BAA-1090 / DSM 15013), this protein is N-succinylglutamate 5-semialdehyde dehydrogenase 1.